A 672-amino-acid chain; its full sequence is Rho GTPase-activating protein 40 (672 aa).

The tract at residues Gly-43–Ser-68 is disordered. Residues Gly-47–Pro-59 show a composition bias toward polar residues. The 199-residue stretch at Val-321–Trp-519 folds into the Rho-GAP domain.

GTPase activator for the Rho-type GTPases by converting them to an inactive GDP-bound state. This chain is Rho GTPase-activating protein 40, found in Mus musculus (Mouse).